The chain runs to 152 residues: Transcriptional regulator MraZ (152 aa).

SpoVT-AbrB domains are found at residues 5–52 (ASAI…PIHE) and 81–124 (AHEV…DEQS).

It belongs to the MraZ family. As to quaternary structure, forms oligomers.

The protein resides in the cytoplasm. It localises to the nucleoid. This is Transcriptional regulator MraZ from Shewanella baltica (strain OS223).